A 261-amino-acid chain; its full sequence is Cytochrome c oxidase subunit 3 (261 aa).

Residues 1–15 lie on the Mitochondrial matrix side of the membrane; the sequence is MTHQTHAYHMVNPSP. The chain crosses the membrane as a helical span at residues 16–34; sequence WPLTGALSALLMTSGLTMW. Residues 35-40 are Mitochondrial intermembrane-facing; the sequence is FHFNSM. A helical membrane pass occupies residues 41 to 66; that stretch reads TLLMIGLTTNMLTMYQWWRDVIREST. At 67-72 the chain is on the mitochondrial matrix side; the sequence is FQGHHT. The chain crosses the membrane as a helical span at residues 73 to 105; the sequence is PAVQKGLRYGMILFIISEVLFFTGFFWAFYHSS. Topologically, residues 106-128 are mitochondrial intermembrane; the sequence is LAPTPELGGCWPPTGIHPLNPLE. Residues 129–152 form a helical membrane-spanning segment; the sequence is VPLLNTSVLLASGVSITWAHHSLM. Topologically, residues 153 to 155 are mitochondrial matrix; that stretch reads EGD. The helical transmembrane segment at 156-183 threads the bilayer; it reads RKHMLQALFITITLGVYFTLLQASEYYE. Topologically, residues 184–190 are mitochondrial intermembrane; it reads APFTISD. Residues 191–223 form a helical membrane-spanning segment; the sequence is GVYGSTFFVATGFHGLHVIIGSTFLIVCFFRQL. Residues 224 to 232 are Mitochondrial matrix-facing; it reads KFHFTSNHH. The helical transmembrane segment at 233–256 threads the bilayer; it reads FGFEAAAWYWHFVDVVWLFLYVSI. Topologically, residues 257 to 261 are mitochondrial intermembrane; that stretch reads YWWGS.

It belongs to the cytochrome c oxidase subunit 3 family. Component of the cytochrome c oxidase (complex IV, CIV), a multisubunit enzyme composed of 14 subunits. The complex is composed of a catalytic core of 3 subunits MT-CO1, MT-CO2 and MT-CO3, encoded in the mitochondrial DNA, and 11 supernumerary subunits COX4I1 (or COX4I2), COX5A, COX5B, COX6A2 (or COX6A1), COX6B1 (or COX6B2), COX6C, COX7A1 (or COX7A2), COX7B, COX7C, COX8B and NDUFA4, which are encoded in the nuclear genome. The complex exists as a monomer or a dimer and forms supercomplexes (SCs) in the inner mitochondrial membrane with NADH-ubiquinone oxidoreductase (complex I, CI) and ubiquinol-cytochrome c oxidoreductase (cytochrome b-c1 complex, complex III, CIII), resulting in different assemblies (supercomplex SCI(1)III(2)IV(1) and megacomplex MCI(2)III(2)IV(2)).

It is found in the mitochondrion inner membrane. The catalysed reaction is 4 Fe(II)-[cytochrome c] + O2 + 8 H(+)(in) = 4 Fe(III)-[cytochrome c] + 2 H2O + 4 H(+)(out). In terms of biological role, component of the cytochrome c oxidase, the last enzyme in the mitochondrial electron transport chain which drives oxidative phosphorylation. The respiratory chain contains 3 multisubunit complexes succinate dehydrogenase (complex II, CII), ubiquinol-cytochrome c oxidoreductase (cytochrome b-c1 complex, complex III, CIII) and cytochrome c oxidase (complex IV, CIV), that cooperate to transfer electrons derived from NADH and succinate to molecular oxygen, creating an electrochemical gradient over the inner membrane that drives transmembrane transport and the ATP synthase. Cytochrome c oxidase is the component of the respiratory chain that catalyzes the reduction of oxygen to water. Electrons originating from reduced cytochrome c in the intermembrane space (IMS) are transferred via the dinuclear copper A center (CU(A)) of subunit 2 and heme A of subunit 1 to the active site in subunit 1, a binuclear center (BNC) formed by heme A3 and copper B (CU(B)). The BNC reduces molecular oxygen to 2 water molecules using 4 electrons from cytochrome c in the IMS and 4 protons from the mitochondrial matrix. In Bos taurus (Bovine), this protein is Cytochrome c oxidase subunit 3 (MT-CO3).